The sequence spans 161 residues: Nucleotide-binding protein SO_3815 (161 aa).

It belongs to the YajQ family.

In terms of biological role, nucleotide-binding protein. The protein is Nucleotide-binding protein SO_3815 of Shewanella oneidensis (strain ATCC 700550 / JCM 31522 / CIP 106686 / LMG 19005 / NCIMB 14063 / MR-1).